The sequence spans 309 residues: Isoflavone reductase homolog IRL (309 aa).

NADP(+) contacts are provided by residues 12 to 18 (GGTGYLG), arginine 37, and lysine 46. Lysine 134 acts as the Proton acceptor in catalysis. Arginine 138 lines the NADP(+) pocket.

Belongs to the NmrA-type oxidoreductase family. Isoflavone reductase subfamily. As to quaternary structure, monomer.

The protein localises to the cytoplasm. The protein operates within alkaloid biosynthesis. Reductase that may be involved in a late step of alkaloid biosynthesis. This is Isoflavone reductase homolog IRL from Zea mays (Maize).